A 282-amino-acid chain; its full sequence is tRNA uridine(34) hydroxylase (282 aa).

Positions 128–222 (EGRPVVMLDT…YFEEVGGSHY (95 aa)) constitute a Rhodanese domain. The active-site Cysteine persulfide intermediate is the Cys-182.

This sequence belongs to the TrhO family.

It catalyses the reaction uridine(34) in tRNA + AH2 + O2 = 5-hydroxyuridine(34) in tRNA + A + H2O. In terms of biological role, catalyzes oxygen-dependent 5-hydroxyuridine (ho5U) modification at position 34 in tRNAs. This is tRNA uridine(34) hydroxylase from Cupriavidus necator (strain ATCC 17699 / DSM 428 / KCTC 22496 / NCIMB 10442 / H16 / Stanier 337) (Ralstonia eutropha).